Consider the following 443-residue polypeptide: 23S rRNA (uracil(1939)-C(5))-methyltransferase RlmD (443 aa).

A TRAM domain is found at 10–68 (RVTTKQTLTVTVNSLDPFGQGVAHHQGKAIFIPGALPGEQAEIELTEQKRQYSRGKLKR). [4Fe-4S] cluster is bound by residues Cys-81, Cys-87, Cys-90, and Cys-168. Gln-271, Phe-300, Asn-305, Glu-321, Asn-348, and Asp-369 together coordinate S-adenosyl-L-methionine. The active-site Nucleophile is Cys-395.

This sequence belongs to the class I-like SAM-binding methyltransferase superfamily. RNA M5U methyltransferase family. RlmD subfamily.

It carries out the reaction uridine(1939) in 23S rRNA + S-adenosyl-L-methionine = 5-methyluridine(1939) in 23S rRNA + S-adenosyl-L-homocysteine + H(+). Catalyzes the formation of 5-methyl-uridine at position 1939 (m5U1939) in 23S rRNA. In Yersinia enterocolitica serotype O:8 / biotype 1B (strain NCTC 13174 / 8081), this protein is 23S rRNA (uracil(1939)-C(5))-methyltransferase RlmD.